We begin with the raw amino-acid sequence, 288 residues long: Extracellular ribonuclease (288 aa).

Residues 1-26 (MTKKAWFLPLVCVLLISGWLAPAASA) form the signal peptide.

The protein resides in the secreted. Mg(2+)-activated ribonuclease which hydrolyzes RNA apparently nonspecifically into oligonucleotides with 5'-terminal phosphate. This chain is Extracellular ribonuclease (bsn), found in Bacillus subtilis (strain 168).